The chain runs to 146 residues: Hemoglobin subunit beta (146 aa).

Val1 bears the N-acetylvaline mark. The 145-residue stretch at 2 to 146 (HLTDAEKNLV…VANALAHKYH (145 aa)) folds into the Globin domain. A heme b-binding site is contributed by His63. Lys82 carries the N6-acetyllysine modification. His92 is a binding site for heme b. Residue Cys93 is modified to S-nitrosocysteine. Lys144 is subject to N6-acetyllysine.

This sequence belongs to the globin family. As to quaternary structure, heterotetramer of two alpha chains and two beta chains. In terms of tissue distribution, red blood cells.

In terms of biological role, involved in oxygen transport from the lung to the various peripheral tissues. The polypeptide is Hemoglobin subunit beta (HBB) (Mesocricetus brandti (Brandt's hamster)).